Here is a 1744-residue protein sequence, read N- to C-terminus: Tensin-1 (1744 aa).

The interval 15–55 is disordered; it reads SPAVNYELPSPGQSITKQVDTPDATRSPRGGQAHRKASRSM. The region spanning 58-230 is the Phosphatase tensin-type domain; the sequence is TAAMESSCEL…HYFSGLLSGS (173 aa). The region spanning 235-361 is the C2 tensin-type domain; sequence NKPLFLHHVI…GKVEFVFSYG (127 aa). Disordered stretches follow at residues 467–505, 569–589, 666–686, 724–797, 934–956, 982–1077, and 1156–1437; these read TLSVSSDSGNSTASTKTDRTDEPGAPGAPTGHAVLSPEE, DELPNQDGHSVGSLGTLSSLD, AQEHLAGYPQRQPASTSPAWL, PQAP…APSR, GSQQLLVSSPPSPTAPAQSQLPH, RVAG…PGLA, and VPSP…GSAV. The segment covering 468–481 has biased composition (polar residues); the sequence is LSVSSDSGNSTAST. Residues 580 to 589 are compositionally biased toward low complexity; that stretch reads GSLGTLSSLD. Polar residues predominate over residues 728-753; the sequence is ARSTSSREAVQRGLNSWQQQGGSRPP. Low complexity predominate over residues 763-773; it reads SHSPSLSSCSP. Over residues 774–783 the composition is skewed to pro residues; the sequence is QPSPLQPMPP. Basic and acidic residues-rich tracts occupy residues 1004–1014 and 1041–1054; these read TPSDSHYEKSS and RPKEPHLHSYKEAF. Residues 1060–1069 are compositionally biased toward polar residues; that stretch reads ASPSSLTSGG. Composition is skewed to low complexity over residues 1156–1169 and 1208–1220; these read VPSPVSTSSPIHSV and SAHSSYQTSSPSS. 3 stretches are compositionally biased toward polar residues: residues 1344–1355, 1370–1380, and 1405–1420; these read LSRQSSASGYQP, GTSTPHSSSPD, and ERSNSLPNYATVNGKA. Residues 1421 to 1435 are compositionally biased toward low complexity; that stretch reads SSPLSSGMSSPSSGS. The region spanning 1472 to 1581 is the SH2 domain; sequence WYKPDISREQ…ALPCKLVIPD (110 aa). Residues 1607 to 1743 form the PTB domain; that stretch reads ACNVLFINSV…SRVMLGSGQK (137 aa).

Belongs to the PTEN phosphatase protein family. As to quaternary structure, binds to actin filaments. Interacts with phosphotyrosine-containing proteins. In terms of processing, tyrosine phosphorylated. As to expression, heart, gizzard, lung and skeletal muscle.

The protein localises to the cell surface. The protein resides in the cell junction. Its subcellular location is the focal adhesion. It localises to the cytoplasm. It is found in the cytoskeleton. May act as a protein phosphatase and/or a lipid phosphatase. Involved in fibrillar adhesion formation. Plays a role in cell polarization and migration. May be involved in cartilage development and in linking signal transduction pathways to the cytoskeleton. The chain is Tensin-1 (TNS1) from Gallus gallus (Chicken).